The chain runs to 205 residues: Probable anaerobic dimethyl sulfoxide reductase chain YnfG (205 aa).

3 consecutive 4Fe-4S ferredoxin-type domains span residues 5 to 33 (YGFFIDSSRCTGCKTCELACKDFKDLGPE), 59 to 89 (FAYYLSISCNHCDDPACTKVCPSGAMHKRED), and 90 to 119 (GFVVVDEDVCIGCRYCHMACPYGAPQYNAE). [4Fe-4S] cluster is bound by residues cysteine 14, cysteine 17, cysteine 20, cysteine 24, cysteine 67, cysteine 70, cysteine 75, cysteine 79, cysteine 99, cysteine 102, cysteine 105, cysteine 109, cysteine 126, cysteine 129, cysteine 141, and cysteine 145. The interval 183 to 205 (IKPNANSRPTGDTTGYLANPEEV) is disordered. Polar residues predominate over residues 186–195 (NANSRPTGDT).

In terms of assembly, the complex consists of three subunits: YnfF, the reductase; YnfG, an electron transfer protein, and YnfH, a membrane anchor protein. The cofactor is [4Fe-4S] cluster.

In terms of biological role, electron transfer subunit of the terminal reductase during anaerobic growth on various sulfoxide and N-oxide compounds. In Escherichia coli O6:H1 (strain CFT073 / ATCC 700928 / UPEC), this protein is Probable anaerobic dimethyl sulfoxide reductase chain YnfG (ynfG).